Here is a 207-residue protein sequence, read N- to C-terminus: Recombination protein RecR (207 aa).

The C4-type zinc-finger motif lies at 60–75; it reads CRRCHNISDSGVCTIC. The Toprim domain maps to 83–178; the sequence is STLCVVENIR…RVSVIARGIA (96 aa).

Belongs to the RecR family.

May play a role in DNA repair. It seems to be involved in an RecBC-independent recombinational process of DNA repair. It may act with RecF and RecO. This Porphyromonas gingivalis (strain ATCC 33277 / DSM 20709 / CIP 103683 / JCM 12257 / NCTC 11834 / 2561) protein is Recombination protein RecR.